The primary structure comprises 151 residues: Large ribosomal subunit protein bL9 (151 aa).

Belongs to the bacterial ribosomal protein bL9 family.

In terms of biological role, binds to the 23S rRNA. This is Large ribosomal subunit protein bL9 from Francisella tularensis subsp. holarctica (strain LVS).